The following is a 451-amino-acid chain: tRNA modification GTPase MnmE (451 aa).

Residues Arg37, Glu95, and Lys135 each contribute to the (6S)-5-formyl-5,6,7,8-tetrahydrofolate site. Residues 232–376 enclose the TrmE-type G domain; the sequence is GLSIVIMGPP…LVEAIADFAG (145 aa). Asn242 provides a ligand contact to K(+). GTP-binding positions include 242-247, 261-267, and 286-289; these read NAGKST, SEIAGTT, and DTAG. A Mg(2+)-binding site is contributed by Ser246. 3 residues coordinate K(+): Ser261, Ile263, and Thr266. Thr267 contributes to the Mg(2+) binding site. Position 451 (Lys451) interacts with (6S)-5-formyl-5,6,7,8-tetrahydrofolate.

The protein belongs to the TRAFAC class TrmE-Era-EngA-EngB-Septin-like GTPase superfamily. TrmE GTPase family. As to quaternary structure, homodimer. Heterotetramer of two MnmE and two MnmG subunits. It depends on K(+) as a cofactor.

The protein localises to the cytoplasm. Functionally, exhibits a very high intrinsic GTPase hydrolysis rate. Involved in the addition of a carboxymethylaminomethyl (cmnm) group at the wobble position (U34) of certain tRNAs, forming tRNA-cmnm(5)s(2)U34. This chain is tRNA modification GTPase MnmE, found in Beijerinckia indica subsp. indica (strain ATCC 9039 / DSM 1715 / NCIMB 8712).